Consider the following 275-residue polypeptide: Tryptophan synthase alpha chain (275 aa).

Residues glutamate 51 and glutamate 62 each act as proton acceptor in the active site.

It belongs to the TrpA family. In terms of assembly, tetramer of two alpha and two beta chains.

The catalysed reaction is (1S,2R)-1-C-(indol-3-yl)glycerol 3-phosphate + L-serine = D-glyceraldehyde 3-phosphate + L-tryptophan + H2O. Its pathway is amino-acid biosynthesis; L-tryptophan biosynthesis; L-tryptophan from chorismate: step 5/5. Functionally, the alpha subunit is responsible for the aldol cleavage of indoleglycerol phosphate to indole and glyceraldehyde 3-phosphate. The protein is Tryptophan synthase alpha chain of Caulobacter sp. (strain K31).